The primary structure comprises 441 residues: Proline--tRNA ligase (441 aa).

It belongs to the class-II aminoacyl-tRNA synthetase family. ProS type 2 subfamily. Homodimer.

Its subcellular location is the cytoplasm. The catalysed reaction is tRNA(Pro) + L-proline + ATP = L-prolyl-tRNA(Pro) + AMP + diphosphate. Functionally, catalyzes the attachment of proline to tRNA(Pro) in a two-step reaction: proline is first activated by ATP to form Pro-AMP and then transferred to the acceptor end of tRNA(Pro). The protein is Proline--tRNA ligase of Bartonella bacilliformis (strain ATCC 35685 / KC583 / Herrer 020/F12,63).